Consider the following 141-residue polypeptide: Cell division protein SepF (141 aa).

This sequence belongs to the SepF family. As to quaternary structure, homodimer. Interacts with FtsZ.

It localises to the cytoplasm. Functionally, cell division protein that is part of the divisome complex and is recruited early to the Z-ring. Probably stimulates Z-ring formation, perhaps through the cross-linking of FtsZ protofilaments. Its function overlaps with FtsA. This is Cell division protein SepF from Anoxybacillus flavithermus (strain DSM 21510 / WK1).